Here is a 27-residue protein sequence, read N- to C-terminus: Voltage-dependent anion-selective channel protein (27 aa).

It belongs to the eukaryotic mitochondrial porin family. In terms of assembly, interacts with hexokinases. In terms of tissue distribution, photoreceptors.

It is found in the mitochondrion outer membrane. Its function is as follows. Forms a channel through the cell membrane that allows diffusion of small hydrophilic molecules. The polypeptide is Voltage-dependent anion-selective channel protein (Doryteuthis pealeii (Longfin inshore squid)).